The sequence spans 314 residues: Malate dehydrogenase (314 aa).

9–15 (IGVGNVG) lines the NAD(+) pocket. Substrate-binding residues include Arg-84 and Arg-90. Residues Asn-97 and 120 to 122 (ISN) contribute to the NAD(+) site. Residues Asn-122 and Arg-153 each coordinate substrate. Residue His-177 is the Proton acceptor of the active site.

Belongs to the LDH/MDH superfamily.

The catalysed reaction is (S)-malate + NAD(+) = oxaloacetate + NADH + H(+). Its function is as follows. Catalyzes the reversible oxidation of malate to oxaloacetate. In Aliarcobacter butzleri (strain RM4018) (Arcobacter butzleri), this protein is Malate dehydrogenase.